The following is a 113-amino-acid chain: Cytochrome c55X (113 aa).

The first 26 residues, 1–26, serve as a signal peptide directing secretion; sequence MTVARHAVSRLGLALASFLLFPLALA. The heme c site is built by cysteine 45, cysteine 48, and histidine 49.

Post-translationally, binds 1 heme c group covalently per subunit.

It is found in the periplasm. Its function is as follows. Monoheme c-type cytochrome. The sequence is that of Cytochrome c55X (nirC) from Stutzerimonas stutzeri (Pseudomonas stutzeri).